The sequence spans 496 residues: Autophagy-related protein 21 (496 aa).

The WD 1 repeat unit spans residues 1 to 35; it reads MKVLQFNQDATCCVVAASSHQISIFNCDPFGKCFE. Positions 41 to 86 are disordered; it reads SKKKTSNNNGTASNSESRNNEESILITNGSRDRTDAEEEEDNEDNA. Residues 46-57 are compositionally biased toward low complexity; that stretch reads SNNNGTASNSES. Residues 75–84 show a composition bias toward acidic residues; that stretch reads DAEEEEDNED. Residues 148–190 form a WD 2 repeat; sequence VMNRKRMCVLLESDQIFIYDISCMKPLETIDLWEDHYKRSQAN. Thr213 carries the phosphothreonine modification. Ser237 is modified (phosphoserine). WD repeat units lie at residues 294 to 334, 346 to 385, and 448 to 488; these read VHKG…DYMS, TRLC…NSLP, and VNES…GECV. A L/FRRG motif motif is present at residues 342 to 346; that stretch reads FRRGT.

Belongs to the WD repeat PROPPIN family.

It is found in the cytoplasm. The protein localises to the vacuole membrane. Its function is as follows. Required for cytoplasm to vacuole transport (Cvt) vesicles formation and mitophagy. Involved in binding of phosphatidylethanolamine to ATG8 and in recruitment of ATG8 and ATG5 to the pre-autophagosomal structure. Protects ATG8 from ARG4-mediated cleavage. Essential for maturation of proaminopeptidase I. This chain is Autophagy-related protein 21 (ATG21), found in Saccharomyces cerevisiae (strain YJM789) (Baker's yeast).